The primary structure comprises 410 residues: Dephospho-CoA kinase (410 aa).

The DPCK domain maps to 3-201 (CIGITGGIGA…HRILPFAYNL (199 aa)). ATP is bound at residue 11–16 (GAGKSL). Positions 196–410 (PFAYNLSQRQ…EWADSTGWRL (215 aa)) are UPF0157.

It in the N-terminal section; belongs to the CoaE family. In the C-terminal section; belongs to the UPF0157 (GrpB) family.

Its subcellular location is the cytoplasm. It carries out the reaction 3'-dephospho-CoA + ATP = ADP + CoA + H(+). Its pathway is cofactor biosynthesis; coenzyme A biosynthesis; CoA from (R)-pantothenate: step 5/5. In terms of biological role, catalyzes the phosphorylation of the 3'-hydroxyl group of dephosphocoenzyme A to form coenzyme A. The chain is Dephospho-CoA kinase from Mycobacterium leprae (strain TN).